A 122-amino-acid chain; its full sequence is Riboflavin kinase (122 aa).

4 to 9 provides a ligand contact to CDP; that stretch reads GFGEGA. The Mg(2+) site is built by Thr33 and Asn35. 2 residues coordinate FMN: Thr84 and Glu92. 97–100 is a CDP binding site; the sequence is VNLR.

The protein belongs to the archaeal riboflavin kinase family. Mg(2+) is required as a cofactor.

It carries out the reaction riboflavin + CTP = CDP + FMN + H(+). The protein operates within cofactor biosynthesis; FMN biosynthesis; FMN from riboflavin (CTP route): step 1/1. In terms of biological role, catalyzes the CTP-dependent phosphorylation of riboflavin (vitamin B2) to form flavin mononucleotide (FMN). The sequence is that of Riboflavin kinase from Methanothermobacter thermautotrophicus (strain ATCC 29096 / DSM 1053 / JCM 10044 / NBRC 100330 / Delta H) (Methanobacterium thermoautotrophicum).